The chain runs to 159 residues: Cytochrome c-type biogenesis protein CcmE (159 aa).

At 1-8 the chain is on the cytoplasmic side; the sequence is MHPIRKKR. A helical; Signal-anchor for type II membrane protein membrane pass occupies residues 9–29; it reads LTIVLFLVAGIAIAVGLTTYA. The Periplasmic segment spans residues 30–159; it reads LRQNINLFYD…VEKAAETTAY (130 aa). Positions 124 and 128 each coordinate heme. The tract at residues 135–159 is disordered; the sequence is EALERSSKGQHKSADVEKAAETTAY. Over residues 136–159 the composition is skewed to basic and acidic residues; sequence ALERSSKGQHKSADVEKAAETTAY.

This sequence belongs to the CcmE/CycJ family.

The protein localises to the cell inner membrane. In terms of biological role, heme chaperone required for the biogenesis of c-type cytochromes. Transiently binds heme delivered by CcmC and transfers the heme to apo-cytochromes in a process facilitated by CcmF and CcmH. The sequence is that of Cytochrome c-type biogenesis protein CcmE from Marinobacter nauticus (strain ATCC 700491 / DSM 11845 / VT8) (Marinobacter aquaeolei).